A 136-amino-acid chain; its full sequence is Phosphoribosyl-AMP cyclohydrolase (136 aa).

Residue Asp92 coordinates Mg(2+). Cys93 lines the Zn(2+) pocket. 2 residues coordinate Mg(2+): Asp94 and Asp96. The Zn(2+) site is built by Cys109 and Cys116.

Belongs to the PRA-CH family. Homodimer. It depends on Mg(2+) as a cofactor. The cofactor is Zn(2+).

The protein localises to the cytoplasm. It catalyses the reaction 1-(5-phospho-beta-D-ribosyl)-5'-AMP + H2O = 1-(5-phospho-beta-D-ribosyl)-5-[(5-phospho-beta-D-ribosylamino)methylideneamino]imidazole-4-carboxamide. It functions in the pathway amino-acid biosynthesis; L-histidine biosynthesis; L-histidine from 5-phospho-alpha-D-ribose 1-diphosphate: step 3/9. With respect to regulation, reversibly inhibited by EDTA and free zinc ions. Enzyme is inactivated by dialysis against 1,10-phenanthroline, which is a zinc specific chelator. Functionally, catalyzes the hydrolysis of the adenine ring of phosphoribosyl-AMP. This Methanococcus vannielii protein is Phosphoribosyl-AMP cyclohydrolase.